The following is a 224-amino-acid chain: MADYWKSIPKYYCKYCQIFVKDTPFARRSHEQTYKHQDAIKKVMDDIHRSNLLRQELEKNLSIPKSATATTASAVSSELASYEKPKKEHPKLRPSKKKATLDDWDIPTSSTETDTISTTHTSYIPTLLAKQEENEETKETTTNKNESLPGTSLKRNREIIEKEERSSFHFRVKPKNLDKVPKLAENEGNKSLESKESNENKVVFKKKKSGKLRTKSSLKEYDQS.

Residues 11–42 (YYCKYCQIFVKDTPFARRSHEQTYKHQDAIKK) form a Matrin-type zinc finger. Low complexity predominate over residues 67 to 80 (ATATTASAVSSELA). Disordered stretches follow at residues 67–158 (ATAT…RNRE) and 172–224 (VKPK…YDQS). Positions 87–98 (KEHPKLRPSKKK) are enriched in basic residues. The span at 108–122 (TSSTETDTISTTHTS) shows a compositional bias: low complexity. The span at 175 to 199 (KNLDKVPKLAENEGNKSLESKESNE) shows a compositional bias: basic and acidic residues. Residues 203–216 (VFKKKKSGKLRTKS) show a composition bias toward basic residues.

It localises to the nucleus. Its subcellular location is the nucleolus. This is an uncharacterized protein from Schizosaccharomyces pombe (strain 972 / ATCC 24843) (Fission yeast).